We begin with the raw amino-acid sequence, 283 residues long: Pantothenate synthetase (283 aa).

31-38 (MGALHDGH) is an ATP binding site. Catalysis depends on His-38, which acts as the Proton donor. Position 62 (Gln-62) interacts with (R)-pantoate. Residue Gln-62 coordinates beta-alanine. 148-151 (GKKD) is an ATP binding site. Gln-154 serves as a coordination point for (R)-pantoate. ATP contacts are provided by residues Val-177 and 185 to 188 (KSSR).

The protein belongs to the pantothenate synthetase family. In terms of assembly, homodimer.

The protein resides in the cytoplasm. It carries out the reaction (R)-pantoate + beta-alanine + ATP = (R)-pantothenate + AMP + diphosphate + H(+). It functions in the pathway cofactor biosynthesis; (R)-pantothenate biosynthesis; (R)-pantothenate from (R)-pantoate and beta-alanine: step 1/1. In terms of biological role, catalyzes the condensation of pantoate with beta-alanine in an ATP-dependent reaction via a pantoyl-adenylate intermediate. The chain is Pantothenate synthetase from Staphylococcus aureus (strain MSSA476).